We begin with the raw amino-acid sequence, 471 residues long: Argininosuccinate lyase (471 aa).

It belongs to the lyase 1 family. Argininosuccinate lyase subfamily.

It is found in the cytoplasm. The catalysed reaction is 2-(N(omega)-L-arginino)succinate = fumarate + L-arginine. It functions in the pathway amino-acid biosynthesis; L-arginine biosynthesis; L-arginine from L-ornithine and carbamoyl phosphate: step 3/3. This Deinococcus radiodurans (strain ATCC 13939 / DSM 20539 / JCM 16871 / CCUG 27074 / LMG 4051 / NBRC 15346 / NCIMB 9279 / VKM B-1422 / R1) protein is Argininosuccinate lyase.